Here is a 212-residue protein sequence, read N- to C-terminus: Ribonuclease HII (212 aa).

The region spanning 1–199 (MIGGIDEAGR…VGGRIGLGRN (199 aa)) is the RNase H type-2 domain. 3 residues coordinate a divalent metal cation: D6, E7, and D101.

This sequence belongs to the RNase HII family. Mn(2+) serves as cofactor. The cofactor is Mg(2+).

The protein localises to the cytoplasm. It catalyses the reaction Endonucleolytic cleavage to 5'-phosphomonoester.. Functionally, endonuclease that specifically degrades the RNA of RNA-DNA hybrids. The protein is Ribonuclease HII of Pyrobaculum aerophilum (strain ATCC 51768 / DSM 7523 / JCM 9630 / CIP 104966 / NBRC 100827 / IM2).